The primary structure comprises 306 residues: Pantothenate kinase (306 aa).

90 to 97 (GSVAVGKS) serves as a coordination point for ATP.

This sequence belongs to the prokaryotic pantothenate kinase family.

Its subcellular location is the cytoplasm. It carries out the reaction (R)-pantothenate + ATP = (R)-4'-phosphopantothenate + ADP + H(+). It participates in cofactor biosynthesis; coenzyme A biosynthesis; CoA from (R)-pantothenate: step 1/5. The polypeptide is Pantothenate kinase (Listeria monocytogenes serotype 4a (strain HCC23)).